We begin with the raw amino-acid sequence, 565 residues long: Berberine bridge enzyme-like C-2 (565 aa).

An N-terminal signal peptide occupies residues 1 to 17 (MFPIIILISFSFTFLFA). N28 and N40 each carry an N-linked (GlcNAc...) asparagine glycan. A disulfide bridge connects residues C32 and C94. Residues 72-248 (YMPKPTVIIL…YAWKIRLLKV (177 aa)) enclose the FAD-binding PCMH-type domain. H109 bears the Pros-8alpha-FAD histidine mark. N363 and N502 each carry an N-linked (GlcNAc...) asparagine glycan.

This sequence belongs to the oxygen-dependent FAD-linked oxidoreductase family. FAD serves as cofactor.

It localises to the vacuole. Its pathway is alkaloid biosynthesis; nicotine biosynthesis. Its function is as follows. Involved in the biosynthesis of pyridine alkaloid natural products, leading mainly to the production of anabasine, anatabine, nicotine and nornicotine, effective deterrents against herbivores with antiparasitic and pesticide properties (neurotoxins); nornicotine serves as the precursor in the synthesis of the carcinogen compound N'-nitrosonornicotine (NNN). Catalyzes a late oxidation step subsequent to the pyridine ring condensation reaction in the biosynthesis of alkaloids. The sequence is that of Berberine bridge enzyme-like C-2 from Nicotiana tabacum (Common tobacco).